A 514-amino-acid chain; its full sequence is 2,3-bisphosphoglycerate-independent phosphoglycerate mutase (514 aa).

Residues aspartate 14 and serine 64 each coordinate Mn(2+). Catalysis depends on serine 64, which acts as the Phosphoserine intermediate. Substrate contacts are provided by residues histidine 125, 155 to 156, arginine 187, arginine 193, 263 to 266, and lysine 336; these read RD and RADR. Residues aspartate 403, histidine 407, aspartate 444, histidine 445, and histidine 463 each coordinate Mn(2+).

This sequence belongs to the BPG-independent phosphoglycerate mutase family. As to quaternary structure, monomer. Mn(2+) serves as cofactor.

The catalysed reaction is (2R)-2-phosphoglycerate = (2R)-3-phosphoglycerate. The protein operates within carbohydrate degradation; glycolysis; pyruvate from D-glyceraldehyde 3-phosphate: step 3/5. Functionally, catalyzes the interconversion of 2-phosphoglycerate and 3-phosphoglycerate. The polypeptide is 2,3-bisphosphoglycerate-independent phosphoglycerate mutase (Shewanella oneidensis (strain ATCC 700550 / JCM 31522 / CIP 106686 / LMG 19005 / NCIMB 14063 / MR-1)).